The primary structure comprises 517 residues: Perilipin-1 (517 aa).

A Phosphoserine modification is found at Ser-81. The residue at position 85 (Thr-85) is a Phosphothreonine. Residues Ser-126, Ser-130, Ser-132, Ser-137, and Ser-174 each carry the phosphoserine modification. Residues 197 to 217 (VESAPSSGRQKTQKAPKAKPS) form a disordered region. Phosphothreonine occurs at positions 224, 299, and 301. The disordered stretch occupies residues 285–321 (HNLAASKDENHEDQTDTEGEETDEEEEEEESEAEENV). Positions 291–322 (KDENHEDQTDTEGEETDEEEEEEESEAEENVL) are required for interaction with CIDEC. Residues 299-319 (TDTEGEETDEEEEEEESEAEE) are compositionally biased toward acidic residues. Residues Ser-315, Ser-385, Ser-387, Pro-408, Ser-411, Ser-434, Ser-436, Ser-440, Ser-460, Ser-492, and Ser-494 each carry the phosphoserine modification. The tract at residues 415-495 (PESEFQDIDN…KPARRVSDSF (81 aa)) is disordered. Basic and acidic residues predominate over residues 483-492 (PREKPARRVS).

It belongs to the perilipin family. Interacts with ABHD5. Interacts with CIDEC. Interacts with AQP7. Post-translationally, major cAMP-dependent protein kinase substrate in adipocytes, also dephosphorylated by PP1. When phosphorylated, may be maximally sensitive to HSL. When unphosphorylated, may play a role in the inhibition of lipolysis, by acting as a barrier in lipid droplet. The N-terminus is blocked. In terms of tissue distribution, adipocytes.

The protein localises to the endoplasmic reticulum. Its subcellular location is the lipid droplet. Its function is as follows. Modulator of adipocyte lipid metabolism. Coats lipid storage droplets to protect them from breakdown by hormone-sensitive lipase (HSL). Its absence may result in leanness. Plays a role in unilocular lipid droplet formation by activating CIDEC. Their interaction promotes lipid droplet enlargement and directional net neutral lipid transfer. May modulate lipolysis and triglyceride levels. The sequence is that of Perilipin-1 (Plin1) from Rattus norvegicus (Rat).